Consider the following 340-residue polypeptide: Meiotic recombination protein DMC1/LIM15 homolog (340 aa).

Residue 126-133 coordinates ATP; it reads GEFRTGKT. DsDNA is bound at residue Arg230. Residues Arg230, Phe233, Arg236, Arg242, and Arg311 each coordinate ssDNA. The dsDNA site is built by Arg236 and Arg242.

Belongs to the RecA family. DMC1 subfamily. Double stacked ring-shaped homooctamer. Interacts with BRCA2. Interacts with the MND1-PSMC3IP heterodimer. Interacts with RAD51AP1; the interaction is direct and stimulates DMC1-mediated homologous recombination. In terms of tissue distribution, testis.

It is found in the nucleus. It localises to the chromosome. In terms of biological role, participates in meiotic recombination, specifically in homologous strand assimilation, which is required for the resolution of meiotic double-strand breaks. This is Meiotic recombination protein DMC1/LIM15 homolog from Mus musculus (Mouse).